The sequence spans 649 residues: Threonine--tRNA ligase (649 aa).

Residues Met1–Thr60 enclose the TGS domain. The segment at Asp248–Pro544 is catalytic. Zn(2+) is bound by residues Cys341, His392, and His521.

The protein belongs to the class-II aminoacyl-tRNA synthetase family. As to quaternary structure, homodimer. Zn(2+) serves as cofactor.

It localises to the cytoplasm. The catalysed reaction is tRNA(Thr) + L-threonine + ATP = L-threonyl-tRNA(Thr) + AMP + diphosphate + H(+). Its function is as follows. Catalyzes the attachment of threonine to tRNA(Thr) in a two-step reaction: L-threonine is first activated by ATP to form Thr-AMP and then transferred to the acceptor end of tRNA(Thr). Also edits incorrectly charged L-seryl-tRNA(Thr). In Deinococcus radiodurans (strain ATCC 13939 / DSM 20539 / JCM 16871 / CCUG 27074 / LMG 4051 / NBRC 15346 / NCIMB 9279 / VKM B-1422 / R1), this protein is Threonine--tRNA ligase.